The primary structure comprises 61 residues: Large ribosomal subunit protein bL32 (61 aa).

Belongs to the bacterial ribosomal protein bL32 family.

This Hyphomonas neptunium (strain ATCC 15444) protein is Large ribosomal subunit protein bL32.